A 300-amino-acid chain; its full sequence is Haloalkane dehalogenase (300 aa).

Positions 32–155 (AIVFQHGNPT…PAVRGVFQGF (124 aa)) constitute an AB hydrolase-1 domain. Aspartate 109 (nucleophile) is an active-site residue. Glutamate 133 functions as the Proton donor in the catalytic mechanism. Histidine 273 (proton acceptor) is an active-site residue.

Belongs to the haloalkane dehalogenase family. Type 2 subfamily. As to quaternary structure, monomer.

The catalysed reaction is 1-haloalkane + H2O = a halide anion + a primary alcohol + H(+). Catalyzes hydrolytic cleavage of carbon-halogen bonds in halogenated aliphatic compounds, leading to the formation of the corresponding primary alcohols, halide ions and protons. The protein is Haloalkane dehalogenase of Mycobacterium bovis (strain ATCC BAA-935 / AF2122/97).